Consider the following 441-residue polypeptide: tRNA modification GTPase MnmE (441 aa).

The (6S)-5-formyl-5,6,7,8-tetrahydrofolate site is built by Arg21, Glu79, and Lys118. One can recognise a TrmE-type G domain in the interval 214–370; the sequence is GFKIAIVGKP…LEGYLKTQDT (157 aa). GTP contacts are provided by residues 224 to 229, 243 to 249, and 268 to 271; these read NVGKSS, SDEAGTT, and DTAG. Mg(2+)-binding residues include Ser228 and Thr249. Lys441 lines the (6S)-5-formyl-5,6,7,8-tetrahydrofolate pocket.

The protein belongs to the TRAFAC class TrmE-Era-EngA-EngB-Septin-like GTPase superfamily. TrmE GTPase family. As to quaternary structure, homodimer. Heterotetramer of two MnmE and two MnmG subunits. The cofactor is K(+).

Its subcellular location is the cytoplasm. In terms of biological role, exhibits a very high intrinsic GTPase hydrolysis rate. Involved in the addition of a carboxymethylaminomethyl (cmnm) group at the wobble position (U34) of certain tRNAs, forming tRNA-cmnm(5)s(2)U34. This chain is tRNA modification GTPase MnmE, found in Campylobacter concisus (strain 13826).